Consider the following 338-residue polypeptide: Probable tRNA pseudouridine synthase B (338 aa).

Asp78 acts as the Nucleophile in catalysis. The PUA domain occupies 245–320; the sequence is LPKIILRDSA…IAASPIRVLM (76 aa).

This sequence belongs to the pseudouridine synthase TruB family. Type 2 subfamily.

The enzyme catalyses uridine(55) in tRNA = pseudouridine(55) in tRNA. In terms of biological role, could be responsible for synthesis of pseudouridine from uracil-55 in the psi GC loop of transfer RNAs. This is Probable tRNA pseudouridine synthase B from Methanosarcina mazei (strain ATCC BAA-159 / DSM 3647 / Goe1 / Go1 / JCM 11833 / OCM 88) (Methanosarcina frisia).